The sequence spans 776 residues: MASLIYRQLLTNSYTVNLSDEIQEIGSTKTQNTTINPGPFAQTGYAPVNWGPGETNDSTTIEPVLDGPYQPTSFNPPVGYWMLLSPTTAGVIVEGTNNTDRWLATILIEPNVTSQQRTYTIFGVQEQITIENTSQTQWRFVDVSKTTQNGSYSQYGPLLSTPKLYAVMKYGGRIHTYSGQTPNATTGYYSATNYDSVNMTTFCDFYIIPRSEESKCTEYINNGLPPIQNTRNIVPLALSARNVIPLKAQSNEDIVVSKTSLWKEMQYNRDITIRFKFANSIVKSGGLGYKWSEISFKPANYQYTYMRDGEEVTAHTTCSVNGMNDFSFNGGSLPTDFVISRYEVIKENSYVYIDYWDDSQAFRNMVYVRSLAANLNSVTCAGGDYNFALPVGQWPYMTGGAVSLHSAGVTLSTQFTDFVSLNSLRFRFRLAVEEPSFAIMRTRVSGLYGLPAANPNNGREYYEIAGRFSLISLVPSNDNYQTPIANSVTVRQDLERQLGELREEFNALSQEIAMSQLIDLALLPLDMFSMFSGIKSTIDAAKSIATNVMKKFKRSSLASSVSTLTDSLSDAASSVSRGSSIRSVGSSVSAWTDVSIQITDVSSSVSSISTQTSTISRRLRLKEMATQTEGMNFDDISAAVLKTKIDKSIQISPTTLPDIVTEASEKFIPNRAYRVINNDEVFEAGTDGRFFAYRVDTFEEIPFDVQKFADLVTDSPVISAIIDFKTLKNLNDNYGIGKQQAFNLLRSDPRVLREFINQNNPIIRNRIEQLIMQCRL.

Residues 65–224 (LDGPYQPTSF…KCTEYINNGL (160 aa)) form a spike head region. Cysteines 203 and 216 form a disulfide. Positions 248-479 (AQSNEDIVVS…LISLVPSNDN (232 aa)) are spike body and stalk (antigen domain). A DGE motif; interaction with ITGA2/ITGB1 heterodimer motif is present at residues 308 to 310 (DGE). A disulfide bridge connects residues Cys-318 and Cys-380. Residues 389 to 409 (LPVGQWPYMTGGAVSLHSAGV) form a hydrophobic; possible role in virus entry into host cell region. A YGL motif; interaction with ITGA4 motif is present at residues 448–450 (YGL). Residues 484-511 (IANSVTVRQDLERQLGELREEFNALSQE) adopt a coiled-coil conformation. Residues 510 to 776 (QEIAMSQLID…IEQLIMQCRL (267 aa)) form a spike foot region. A KID motif; interaction with HSPA8 motif is present at residues 644–646 (KID).

This sequence belongs to the rotavirus VP4 family. In terms of assembly, homotrimer. VP4 adopts a dimeric appearance above the capsid surface, while forming a trimeric base anchored inside the capsid layer. Only hints of the third molecule are observed above the capsid surface. It probably performs a series of molecular rearrangements during viral entry. Prior to trypsin cleavage, it is flexible. The priming trypsin cleavage triggers its rearrangement into rigid spikes with approximate two-fold symmetry of their protruding parts. After an unknown second triggering event, cleaved VP4 may undergo another rearrangement, in which two VP5* subunits fold back on themselves and join a third subunit to form a tightly associated trimer, shaped like a folded umbrella. Interacts with VP6. Interacts with VP7. Homotrimer. The trimer is coiled-coil stabilized by its C-terminus, however, its N-terminus, known as antigen domain or 'body', seems to be flexible allowing it to self-associate either as a dimer or a trimer. In terms of processing, proteolytic cleavage by trypsin results in activation of VP4 functions and greatly increases infectivity. The penetration into the host cell is dependent on trypsin treatment of VP4. It produces two peptides, VP5* and VP8* that remain associated with the virion. Cleavage of VP4 by trypsin probably occurs in vivo in the lumen of the intestine prior to infection of enterocytes. Trypsin seems to be incorporated into the three-layered viral particles but remains inactive as long as the viral outer capsid is intact and would only be activated upon the solubilization of the latter.

The protein localises to the virion. It is found in the host rough endoplasmic reticulum. It localises to the host cell membrane. Its subcellular location is the host cytoplasm. The protein resides in the host cytoskeleton. The protein localises to the host endoplasmic reticulum-Golgi intermediate compartment. In terms of biological role, spike-forming protein that mediates virion attachment to the host epithelial cell receptors and plays a major role in cell penetration, determination of host range restriction and virulence. Rotavirus attachment and entry into the host cell probably involves multiple sequential contacts between the outer capsid proteins VP4 and VP7, and the cell receptors. It is subsequently lost, together with VP7, following virus entry into the host cell. Following entry into the host cell, low intracellular or intravesicular Ca(2+) concentration probably causes the calcium-stabilized VP7 trimers to dissociate from the virion. This step is probably necessary for the membrane-disrupting entry step and the release of VP4, which is locked onto the virion by VP7. During the virus exit from the host cell, VP4 seems to be required to target the newly formed virions to the host cell lipid rafts. Forms the spike 'foot' and 'body' and acts as a membrane permeabilization protein that mediates release of viral particles from endosomal compartments into the cytoplasm. During entry, the part of VP5* that protrudes from the virus folds back on itself and reorganizes from a local dimer to a trimer. This reorganization may be linked to membrane penetration by exposing VP5* hydrophobic region. In integrin-dependent strains, VP5* targets the integrin heterodimer ITGA2/ITGB1 for cell attachment. Its function is as follows. Forms the head of the spikes and mediates the recognition of specific host cell surface glycans. It is the viral hemagglutinin and an important target of neutralizing antibodies. In sialic acid-dependent strains, VP8* binds to host cell sialic acid, most probably a ganglioside, providing the initial contact. In some other strains, VP8* mediates the attachment to histo-blood group antigens (HBGAs) for viral entry. The sequence is that of Outer capsid protein VP4 from Homo sapiens (Human).